The primary structure comprises 505 residues: ATP synthase subunit beta (505 aa).

ATP is bound at residue 157 to 164 (GGAGVGKT).

This sequence belongs to the ATPase alpha/beta chains family. As to quaternary structure, F-type ATPases have 2 components, CF(1) - the catalytic core - and CF(0) - the membrane proton channel. CF(1) has five subunits: alpha(3), beta(3), gamma(1), delta(1), epsilon(1). CF(0) has three main subunits: a(1), b(2) and c(9-12). The alpha and beta chains form an alternating ring which encloses part of the gamma chain. CF(1) is attached to CF(0) by a central stalk formed by the gamma and epsilon chains, while a peripheral stalk is formed by the delta and b chains.

It localises to the cell inner membrane. The enzyme catalyses ATP + H2O + 4 H(+)(in) = ADP + phosphate + 5 H(+)(out). In terms of biological role, produces ATP from ADP in the presence of a proton gradient across the membrane. The catalytic sites are hosted primarily by the beta subunits. In Bacteroides thetaiotaomicron (strain ATCC 29148 / DSM 2079 / JCM 5827 / CCUG 10774 / NCTC 10582 / VPI-5482 / E50), this protein is ATP synthase subunit beta.